The following is a 360-amino-acid chain: Phosphoserine aminotransferase (360 aa).

Arg41 contacts L-glutamate. Residues Trp101, Thr152, Asp172, and Gln195 each coordinate pyridoxal 5'-phosphate. The residue at position 196 (Lys196) is an N6-(pyridoxal phosphate)lysine. Residue 237-238 coordinates pyridoxal 5'-phosphate; sequence NT.

The protein belongs to the class-V pyridoxal-phosphate-dependent aminotransferase family. SerC subfamily. Homodimer. Pyridoxal 5'-phosphate serves as cofactor.

It is found in the cytoplasm. The catalysed reaction is O-phospho-L-serine + 2-oxoglutarate = 3-phosphooxypyruvate + L-glutamate. It catalyses the reaction 4-(phosphooxy)-L-threonine + 2-oxoglutarate = (R)-3-hydroxy-2-oxo-4-phosphooxybutanoate + L-glutamate. The protein operates within amino-acid biosynthesis; L-serine biosynthesis; L-serine from 3-phospho-D-glycerate: step 2/3. It participates in cofactor biosynthesis; pyridoxine 5'-phosphate biosynthesis; pyridoxine 5'-phosphate from D-erythrose 4-phosphate: step 3/5. In terms of biological role, catalyzes the reversible conversion of 3-phosphohydroxypyruvate to phosphoserine and of 3-hydroxy-2-oxo-4-phosphonooxybutanoate to phosphohydroxythreonine. This Burkholderia vietnamiensis (strain G4 / LMG 22486) (Burkholderia cepacia (strain R1808)) protein is Phosphoserine aminotransferase.